Reading from the N-terminus, the 823-residue chain is Tax1-binding protein 1 homolog B (823 aa).

A coiled-coil region spans residues 149-487; that stretch reads VTTKASYLEQ…QKQVVKFNEQ (339 aa). Disordered stretches follow at residues 342-377 and 486-519; these read HRQLLANSSPSGESKALREQLRQKEEQLQATQQQAN and EQQGVKRSPGSDAAAGPLSASPEASAPGSPSTSD. Basic and acidic residues predominate over residues 356–368; sequence KALREQLRQKEEQ. Positions 498-518 are enriched in low complexity; it reads AAAGPLSASPEASAPGSPSTS. The stretch at 548–638 forms a coiled coil; the sequence is QMLNEERERC…NREEEQKDSN (91 aa). The segment at 650-746 is disordered; it reads MPYAQDDPSP…EPAAPEPAEF (97 aa). Acidic residues predominate over residues 723–739; it reads LEEPEEPQSTQNDDEPA. 2 UBZ1-type zinc fingers span residues 762-788 and 789-815; these read QKRCPLCEVIFPPHYDQSKFEEHVESH and WKICPMCSEQFPLDCDQQLFEKHVLTH. Cysteine 765, cysteine 768, histidine 784, histidine 788, cysteine 792, cysteine 795, histidine 811, and histidine 815 together coordinate Zn(2+).

In terms of tissue distribution, expressed at relatively high levels in both proximal and distal regions of the fin bud during pectoral fin development.

May have anti-apoptotic activity. In Danio rerio (Zebrafish), this protein is Tax1-binding protein 1 homolog B (tax1bp1b).